The following is a 179-amino-acid chain: Probable protein archease (179 aa).

Asp55, Asp178, and Val179 together coordinate Ca(2+).

It belongs to the archease family.

Its function is as follows. Activates the tRNA-splicing ligase complex by facilitating the enzymatic turnover of catalytic subunit RtcB. Acts by promoting the guanylylation of RtcB, a key intermediate step in tRNA ligation. Can also alter the NTP specificity of RtcB such that ATP, dGTP or ITP is used efficiently. In Mycobacterium tuberculosis (strain CDC 1551 / Oshkosh), this protein is Probable protein archease.